The sequence spans 49 residues: Large ribosomal subunit protein bL33B (49 aa).

The protein belongs to the bacterial ribosomal protein bL33 family.

The polypeptide is Large ribosomal subunit protein bL33B (rpmG2) (Listeria innocua serovar 6a (strain ATCC BAA-680 / CLIP 11262)).